Reading from the N-terminus, the 311-residue chain is Aspartate carbamoyltransferase catalytic subunit (311 aa).

Carbamoyl phosphate-binding residues include Arg-55 and Thr-56. Lys-85 is an L-aspartate binding site. Carbamoyl phosphate contacts are provided by Arg-106, His-135, and Gln-138. Positions 168 and 230 each coordinate L-aspartate. Positions 268 and 269 each coordinate carbamoyl phosphate.

The protein belongs to the aspartate/ornithine carbamoyltransferase superfamily. ATCase family. Heterododecamer (2C3:3R2) of six catalytic PyrB chains organized as two trimers (C3), and six regulatory PyrI chains organized as three dimers (R2).

The enzyme catalyses carbamoyl phosphate + L-aspartate = N-carbamoyl-L-aspartate + phosphate + H(+). Its pathway is pyrimidine metabolism; UMP biosynthesis via de novo pathway; (S)-dihydroorotate from bicarbonate: step 2/3. Catalyzes the condensation of carbamoyl phosphate and aspartate to form carbamoyl aspartate and inorganic phosphate, the committed step in the de novo pyrimidine nucleotide biosynthesis pathway. This is Aspartate carbamoyltransferase catalytic subunit from Citrobacter koseri (strain ATCC BAA-895 / CDC 4225-83 / SGSC4696).